A 263-amino-acid polypeptide reads, in one-letter code: Orotidine 5'-phosphate decarboxylase (263 aa).

Residues aspartate 36, 58-60 (KTH), 90-99 (DRKFADIGNT), tyrosine 216, and arginine 234 each bind substrate. The Proton donor role is filled by lysine 92.

This sequence belongs to the OMP decarboxylase family.

The enzyme catalyses orotidine 5'-phosphate + H(+) = UMP + CO2. It functions in the pathway pyrimidine metabolism; UMP biosynthesis via de novo pathway; UMP from orotate: step 2/2. The polypeptide is Orotidine 5'-phosphate decarboxylase (URA3) (Komagataella pastoris (Yeast)).